Here is a 393-residue protein sequence, read N- to C-terminus: Lipid-A-disaccharide synthase (393 aa).

Belongs to the LpxB family.

It carries out the reaction a lipid X + a UDP-2-N,3-O-bis[(3R)-3-hydroxyacyl]-alpha-D-glucosamine = a lipid A disaccharide + UDP + H(+). It functions in the pathway bacterial outer membrane biogenesis; LPS lipid A biosynthesis. Its function is as follows. Condensation of UDP-2,3-diacylglucosamine and 2,3-diacylglucosamine-1-phosphate to form lipid A disaccharide, a precursor of lipid A, a phosphorylated glycolipid that anchors the lipopolysaccharide to the outer membrane of the cell. This is Lipid-A-disaccharide synthase from Bordetella pertussis (strain Tohama I / ATCC BAA-589 / NCTC 13251).